Consider the following 200-residue polypeptide: 3-isopropylmalate dehydratase small subunit (200 aa).

The protein belongs to the LeuD family. LeuD type 1 subfamily. Heterodimer of LeuC and LeuD.

The catalysed reaction is (2R,3S)-3-isopropylmalate = (2S)-2-isopropylmalate. The protein operates within amino-acid biosynthesis; L-leucine biosynthesis; L-leucine from 3-methyl-2-oxobutanoate: step 2/4. Functionally, catalyzes the isomerization between 2-isopropylmalate and 3-isopropylmalate, via the formation of 2-isopropylmaleate. This is 3-isopropylmalate dehydratase small subunit from Actinobacillus pleuropneumoniae serotype 3 (strain JL03).